The sequence spans 207 residues: DNA-directed RNA polymerase subunit alpha (207 aa).

This sequence belongs to the RNA polymerase alpha chain family. In plastids the minimal PEP RNA polymerase catalytic core is composed of four subunits: alpha, beta, beta', and beta''. When a (nuclear-encoded) sigma factor is associated with the core the holoenzyme is formed, which can initiate transcription.

The protein localises to the plastid. Its subcellular location is the chloroplast. It catalyses the reaction RNA(n) + a ribonucleoside 5'-triphosphate = RNA(n+1) + diphosphate. DNA-dependent RNA polymerase catalyzes the transcription of DNA into RNA using the four ribonucleoside triphosphates as substrates. This Euglena myxocylindracea protein is DNA-directed RNA polymerase subunit alpha (rpoA).